The following is a 545-amino-acid chain: Probable bifunctional tRNA threonylcarbamoyladenosine biosynthesis protein (545 aa).

Residues 1 to 329 form a kae1 region; it reads MDTSKDLICI…YRSDMVEVNW (329 aa). 3 residues coordinate Fe cation: His112, His116, and Tyr133. L-threonylcarbamoyladenylate is bound by residues 133–137, Asp165, Gly178, Glu182, and Asn262; that span reads YVSGG. Residue Asp290 coordinates Fe cation. The Protein kinase domain maps to 344 to 545; that stretch reads IIPEHLIGKG…KEVEKRARYL (202 aa). Residues 350-358 and Lys371 contribute to the ATP site; that span reads IGKGAEADI. Asp463 functions as the Proton acceptor; for kinase activity in the catalytic mechanism.

It in the N-terminal section; belongs to the KAE1 / TsaD family. The protein in the C-terminal section; belongs to the protein kinase superfamily. Tyr protein kinase family. BUD32 subfamily. As to quaternary structure, component of the KEOPS complex that consists of Kae1, Bud32, Cgi121 and Pcc1; the whole complex dimerizes. Fe(2+) serves as cofactor.

The protein localises to the cytoplasm. It catalyses the reaction L-seryl-[protein] + ATP = O-phospho-L-seryl-[protein] + ADP + H(+). The catalysed reaction is L-threonyl-[protein] + ATP = O-phospho-L-threonyl-[protein] + ADP + H(+). The enzyme catalyses L-threonylcarbamoyladenylate + adenosine(37) in tRNA = N(6)-L-threonylcarbamoyladenosine(37) in tRNA + AMP + H(+). Required for the formation of a threonylcarbamoyl group on adenosine at position 37 (t(6)A37) in tRNAs that read codons beginning with adenine. Is a component of the KEOPS complex that is probably involved in the transfer of the threonylcarbamoyl moiety of threonylcarbamoyl-AMP (TC-AMP) to the N6 group of A37. The Kae1 domain likely plays a direct catalytic role in this reaction. The Bud32 domain probably displays kinase activity that regulates Kae1 function. In Methanococcus maripaludis (strain C5 / ATCC BAA-1333), this protein is Probable bifunctional tRNA threonylcarbamoyladenosine biosynthesis protein.